Here is a 220-residue protein sequence, read N- to C-terminus: MVYKLVLLFCIASLGYSVEYKNTICPHRQDYRYWYFVAELTIGVNYDINSTIIGECHMSESYIDRNANIVLTGYGLKVNMTIMDTDQRFVAAAEGVGKDNKLSVLLFTTQRLDKVHHNISVTITCMEMNCGTTKYNSDLPESIHKSSSCDITINGSCVTCVNLETDPTKINPHYLHPKNKYLYHNSEYSMRGSYGVTFIDELNQCLLDIKELSYDICYRE.

The N-terminal stretch at 1–17 is a signal peptide; that stretch reads MVYKLVLLFCIASLGYS. 4 N-linked (GlcNAc...) asparagine; by host glycosylation sites follow: asparagine 49, asparagine 79, asparagine 118, and asparagine 154.

It belongs to the orthopoxvirus OPG038 family. In terms of assembly, homooligomer. Interacts with host CD80 and CD86 when secreted. Post-translationally, glycosylated by host.

The protein localises to the host endoplasmic reticulum. It is found in the secreted. Plays a role in immune evasion. When secreted, inhibits T-cell activation by preventing the binding of host CD80 and CD86 to soluble CTLA4 and CD28. In the infected cell, may inhibits host NF kappa B activation. The protein is Early protein OPG038 (OPG038) of Cynomys gunnisoni (Gunnison's prairie dog).